The following is a 164-amino-acid chain: Large ribosomal subunit protein bL9 (164 aa).

It belongs to the bacterial ribosomal protein bL9 family.

Binds to the 23S rRNA. This is Large ribosomal subunit protein bL9 from Borrelia hermsii (strain HS1 / DAH).